Here is a 229-residue protein sequence, read N- to C-terminus: uncharacterized protein (229 aa).

The S4 RNA-binding domain occupies 2 to 69 (QRLAKLISNA…KSRLWIYYKP (68 aa)). Asp102 acts as the Nucleophile in catalysis.

This sequence belongs to the pseudouridine synthase RsuA family.

It catalyses the reaction a uridine in RNA = a pseudouridine in RNA. This is an uncharacterized protein from Rickettsia bellii (strain RML369-C).